A 282-amino-acid polypeptide reads, in one-letter code: 4-diphosphocytidyl-2-C-methyl-D-erythritol kinase (282 aa).

Lysine 11 is an active-site residue. 93–103 (LVSAGLAGGSA) serves as a coordination point for ATP. Aspartate 133 is an active-site residue.

This sequence belongs to the GHMP kinase family. IspE subfamily.

The catalysed reaction is 4-CDP-2-C-methyl-D-erythritol + ATP = 4-CDP-2-C-methyl-D-erythritol 2-phosphate + ADP + H(+). It participates in isoprenoid biosynthesis; isopentenyl diphosphate biosynthesis via DXP pathway; isopentenyl diphosphate from 1-deoxy-D-xylulose 5-phosphate: step 3/6. Its function is as follows. Catalyzes the phosphorylation of the position 2 hydroxy group of 4-diphosphocytidyl-2C-methyl-D-erythritol. The sequence is that of 4-diphosphocytidyl-2-C-methyl-D-erythritol kinase from Ehrlichia chaffeensis (strain ATCC CRL-10679 / Arkansas).